We begin with the raw amino-acid sequence, 762 residues long: Catalase-peroxidase (762 aa).

A disordered region spans residues 1-22 (MAEAKCPFSQSRSNANVAGGGT). A cross-link (tryptophyl-tyrosyl-methioninium (Trp-Tyr) (with M-268)) is located at residues 96–242 (WHSAGTYRVF…LAASHMGLIY (147 aa)). His97 acts as the Proton acceptor in catalysis. The segment at residues 242 to 268 (YVNPEGPDGNPDPVAAARDIRTTFGRM) is a cross-link (tryptophyl-tyrosyl-methioninium (Tyr-Met) (with W-96)). Residue His283 participates in heme b binding.

This sequence belongs to the peroxidase family. Peroxidase/catalase subfamily. Homodimer or homotetramer. The cofactor is heme b. Post-translationally, formation of the three residue Trp-Tyr-Met cross-link is important for the catalase, but not the peroxidase activity of the enzyme.

It localises to the cytoplasm. The enzyme catalyses H2O2 + AH2 = A + 2 H2O. It catalyses the reaction 2 H2O2 = O2 + 2 H2O. In terms of biological role, bifunctional enzyme with both catalase and broad-spectrum peroxidase activity. The protein is Catalase-peroxidase of Aspergillus niger (strain ATCC MYA-4892 / CBS 513.88 / FGSC A1513).